The sequence spans 363 residues: Peptide chain release factor 2 (363 aa).

Residue Gln-251 is modified to N5-methylglutamine.

Belongs to the prokaryotic/mitochondrial release factor family. Methylated by PrmC. Methylation increases the termination efficiency of RF2.

The protein resides in the cytoplasm. Peptide chain release factor 2 directs the termination of translation in response to the peptide chain termination codons UGA and UAA. The polypeptide is Peptide chain release factor 2 (prfB) (Helicobacter pylori (strain J99 / ATCC 700824) (Campylobacter pylori J99)).